Here is a 129-residue protein sequence, read N- to C-terminus: L-ectoine synthase (129 aa).

Belongs to the ectoine synthase family.

The enzyme catalyses (2S)-4-acetamido-2-aminobutanoate = L-ectoine + H2O. The protein operates within amine and polyamine biosynthesis; ectoine biosynthesis; L-ectoine from L-aspartate 4-semialdehyde: step 3/3. In terms of biological role, catalyzes the circularization of gamma-N-acetyl-alpha,gamma-diaminobutyric acid (ADABA) to ectoine (1,4,5,6-tetrahydro-2-methyl-4-pyrimidine carboxylic acid), which is an excellent osmoprotectant. The polypeptide is L-ectoine synthase (Mycobacterium sp. (strain KMS)).